The primary structure comprises 174 residues: Nucleoside-triphosphatase THEP1 (174 aa).

ATP contacts are provided by residues 15-22 and 102-109; these read GMPGVGKT and LAIVDEIG.

It belongs to the THEP1 NTPase family.

The catalysed reaction is a ribonucleoside 5'-triphosphate + H2O = a ribonucleoside 5'-diphosphate + phosphate + H(+). In terms of biological role, has nucleotide phosphatase activity towards ATP, GTP, CTP, TTP and UTP. May hydrolyze nucleoside diphosphates with lower efficiency. The chain is Nucleoside-triphosphatase THEP1 from Pyrobaculum islandicum (strain DSM 4184 / JCM 9189 / GEO3).